The following is a 264-amino-acid chain: TLC domain-containing protein 2 (264 aa).

Helical transmembrane passes span 3–23 (PTGL…HWGL), 42–62 (LCVS…GLSL), 77–97 (WALV…ADLL), 114–134 (VVVS…FSMV), 169–189 (SLAT…LWLF), and 199–219 (LVTL…ILGI). The 194-residue stretch at 34–227 (RDRWQWWNLC…GIRILVNDVL (194 aa)) folds into the TLC domain. Positions 230–264 (RPHPPSPGHEKTRGTRTRRDNGPVTSNSSTLSLKD) are disordered. The segment covering 237–250 (GHEKTRGTRTRRDN) has biased composition (basic and acidic residues). Residues 252–264 (PVTSNSSTLSLKD) are compositionally biased toward polar residues.

The protein belongs to the TLCD family.

It localises to the cell membrane. Regulates the composition and fluidity of the plasma membrane. Inhibits the incorporation of membrane-fluidizing phospholipids containing omega-3 long-chain polyunsaturated fatty acids (LCPUFA) and thereby promotes membrane rigidity. Does not appear to have any effect on LCPUFA synthesis. This Homo sapiens (Human) protein is TLC domain-containing protein 2 (TLCD2).